The chain runs to 1809 residues: Stereocilin (1809 aa).

Positions 1–22 (MALSLQPQLLLLLSLLPQEVTS) are cleaved as a signal peptide. Asn-63, Asn-200, Asn-295, Asn-352, and Asn-364 each carry an N-linked (GlcNAc...) asparagine glycan. Positions 376–426 (PATPRPPPTTPRPPPTTPQPPPTTTQPIPDTTQPPPVTPRPPPTTPQPPPS) are disordered. Pro residues-rich tracts occupy residues 378 to 399 (TPRP…PPTT) and 407 to 426 (TQPP…PPPS). Residues Asn-467, Asn-516, Asn-580, Asn-605, Asn-696, Asn-860, Asn-952, Asn-1000, Asn-1213, and Asn-1308 are each glycosylated (N-linked (GlcNAc...) asparagine).

The protein belongs to the stereocilin family. In terms of tissue distribution, strongly expressed in the inner ear, detected in the testis, and barely detected in the eye. Detected in the six sensory areas of the inner ear by immunofluorescence. Expressed only in the sensory hair cells and associated with the stereocilia, the stiff microvilli forming the structure for mechanoreception of sound stimulation.

It localises to the cell surface. The protein localises to the cell projection. The protein resides in the kinocilium. It is found in the stereocilium. Functionally, essential to the formation of horizontal top connectors between outer hair cell stereocilia. The polypeptide is Stereocilin (Strc) (Mus musculus (Mouse)).